The sequence spans 131 residues: D-ribose pyranase (131 aa).

The active-site Proton donor is the His-20. Substrate-binding positions include Asp-28, His-98, and 120–122 (YSN).

This sequence belongs to the RbsD / FucU family. RbsD subfamily. Homodecamer.

The protein resides in the cytoplasm. The catalysed reaction is beta-D-ribopyranose = beta-D-ribofuranose. The protein operates within carbohydrate metabolism; D-ribose degradation; D-ribose 5-phosphate from beta-D-ribopyranose: step 1/2. Its function is as follows. Catalyzes the interconversion of beta-pyran and beta-furan forms of D-ribose. The sequence is that of D-ribose pyranase from Limosilactobacillus reuteri (strain DSM 20016) (Lactobacillus reuteri).